Here is a 447-residue protein sequence, read N- to C-terminus: Asparagine--tRNA ligase (447 aa).

The protein belongs to the class-II aminoacyl-tRNA synthetase family. As to quaternary structure, homodimer.

It localises to the cytoplasm. It carries out the reaction tRNA(Asn) + L-asparagine + ATP = L-asparaginyl-tRNA(Asn) + AMP + diphosphate + H(+). This Lactococcus lactis subsp. cremoris (strain MG1363) protein is Asparagine--tRNA ligase.